Reading from the N-terminus, the 117-residue chain is UPF0321 protein PJ695.01c (117 aa).

The N-terminal stretch at 1–17 (MLLLLYICCLFLKFILA) is a signal peptide. 4 N-linked (GlcNAc...) asparagine glycosylation sites follow: Asn39, Asn65, Asn71, and Asn104.

This sequence belongs to the UPF0321 family.

In Schizosaccharomyces pombe (strain 972 / ATCC 24843) (Fission yeast), this protein is UPF0321 protein PJ695.01c.